A 432-amino-acid chain; its full sequence is EF-hand calcium-binding domain-containing protein 3 (432 aa).

2 EF-hand domains span residues 45–80 (AQLE…LGMN) and 81–116 (LNTY…KKLF). Residues aspartate 94, aspartate 96, aspartate 98, lysine 100, and aspartate 105 each contribute to the Ca(2+) site. A Phosphotyrosine modification is found at tyrosine 273. A disordered region spans residues 394–432 (SMNKSSPSNSGLSSPSDFSESDPETGRKRKRKSSRGFRQ). Residues 395-411 (MNKSSPSNSGLSSPSDF) show a composition bias toward low complexity. Residues 420 to 432 (RKRKRKSSRGFRQ) show a composition bias toward basic residues.

The sequence is that of EF-hand calcium-binding domain-containing protein 3 (Efcab3) from Mus musculus (Mouse).